Here is a 489-residue protein sequence, read N- to C-terminus: Rhamnulokinase (489 aa).

Ala13–Arg17 contacts ATP. A disulfide bridge links Cys68 with Cys222. Residues Gly83 and His236 to Thr238 contribute to the substrate site. Asp237 (proton acceptor) is an active-site residue. Position 259 (Thr259) interacts with ATP. Residue Asn296 participates in substrate binding. Gln304 contributes to the ATP binding site. Cys353 and Cys370 are oxidised to a cystine. Gly402 is an ATP binding site. Cys413 and Cys417 are oxidised to a cystine.

It belongs to the rhamnulokinase family. Monomer. Requires Mg(2+) as cofactor.

It carries out the reaction L-rhamnulose + ATP = L-rhamnulose 1-phosphate + ADP + H(+). It functions in the pathway carbohydrate degradation; L-rhamnose degradation; glycerone phosphate from L-rhamnose: step 2/3. Involved in the catabolism of L-rhamnose (6-deoxy-L-mannose). Catalyzes the transfer of the gamma-phosphate group from ATP to the 1-hydroxyl group of L-rhamnulose to yield L-rhamnulose 1-phosphate. The chain is Rhamnulokinase from Escherichia coli O139:H28 (strain E24377A / ETEC).